The sequence spans 374 residues: Ribosomal RNA large subunit methyltransferase G (374 aa).

The protein belongs to the methyltransferase superfamily. RlmG family.

It localises to the cytoplasm. It carries out the reaction guanosine(1835) in 23S rRNA + S-adenosyl-L-methionine = N(2)-methylguanosine(1835) in 23S rRNA + S-adenosyl-L-homocysteine + H(+). In terms of biological role, specifically methylates the guanine in position 1835 (m2G1835) of 23S rRNA. This Pseudomonas putida (strain W619) protein is Ribosomal RNA large subunit methyltransferase G.